The sequence spans 414 residues: Nuclear pore complex-interacting protein family member B7 (414 aa).

Positions 1 to 18 (MRLRFWLLIWLLLGFISH) are cleaved as a signal peptide. Residue N111 is glycosylated (N-linked (GlcNAc...) asparagine). Disordered regions lie at residues 242-262 (RMGR…NSLS) and 335-402 (SPLP…LRTR). Over residues 252-262 (QQHSITDNSLS) the composition is skewed to polar residues. Residues 356–384 (EVEKPPKPKRWRVDEVEQSPKPKRQREAE) show a composition bias toward basic and acidic residues. Residues 390-402 (KPKRRRLSKLRTR) are compositionally biased toward basic residues.

This sequence belongs to the NPIP family.

The protein localises to the secreted. The chain is Nuclear pore complex-interacting protein family member B7 (NPIPB7) from Homo sapiens (Human).